Reading from the N-terminus, the 352-residue chain is Glycerol-1-phosphate dehydrogenase [NAD(P)+] (352 aa).

Residues 91 to 95 and 113 to 116 each bind NAD(+); these read GRVID and TVAS. Asp-118 lines the substrate pocket. Ser-122 provides a ligand contact to NAD(+). Residue Glu-169 coordinates substrate. 2 residues coordinate Zn(2+): Glu-169 and His-249. His-253 lines the substrate pocket. A Zn(2+)-binding site is contributed by His-269.

The protein belongs to the glycerol-1-phosphate dehydrogenase family. In terms of assembly, homodimer. Zn(2+) is required as a cofactor.

The protein localises to the cytoplasm. It carries out the reaction sn-glycerol 1-phosphate + NAD(+) = dihydroxyacetone phosphate + NADH + H(+). It catalyses the reaction sn-glycerol 1-phosphate + NADP(+) = dihydroxyacetone phosphate + NADPH + H(+). The protein operates within membrane lipid metabolism; glycerophospholipid metabolism. In terms of biological role, catalyzes the NAD(P)H-dependent reduction of dihydroxyacetonephosphate (DHAP or glycerone phosphate) to glycerol 1-phosphate (G1P). The G1P thus generated is used as the glycerophosphate backbone of phospholipids in the cellular membranes of Archaea. This is Glycerol-1-phosphate dehydrogenase [NAD(P)+] from Caldivirga maquilingensis (strain ATCC 700844 / DSM 13496 / JCM 10307 / IC-167).